A 759-amino-acid chain; its full sequence is Solute carrier family 26 member 6 (759 aa).

Residues 1–115 (MGLADASGPR…PQGLAYALLA (115 aa)) lie on the Cytoplasmic side of the membrane. Residues 116–136 (GLPPVFGLYSSFYPVFIYFLF) traverse the membrane as a helical segment. The Extracellular portion of the chain corresponds to 137–186 (GTSRHISVGTFAVMSVMVGSVTESLAPQALNDSMINETARDAARVQVAST). Asn167 and Asn172 each carry an N-linked (GlcNAc) asparagine glycan. The chain crosses the membrane as a helical span at residues 187 to 207 (LSVLVGLFQVGLGLIHFGFVV). At 208 to 263 (TYLSEPLVRGYTTAAAVQVFVSQLKYVFGLHLSSHSGPLSLIYTVLEVCWKLPQSK) the chain is on the cytoplasmic side. Residues 264 to 284 (VGTVVTAAVAGVVLVVVKLLN) form a helical membrane-spanning segment. The Extracellular segment spans residues 285 to 293 (DKLQQQLPM). Residues 294-314 (PIPGELLTLIGATGISYGMGL) traverse the membrane as a helical segment. At 315–347 (KHRFEVDVVGNIPAGLVPPVAPNTQLFSKLVGS) the chain is on the cytoplasmic side. Residues 348 to 368 (AFTIAVVGFAIAISLGKIFAL) traverse the membrane as a helical segment. Topologically, residues 369-379 (RHGYRVDSNQE) are extracellular. Residues 380-400 (LVALGLSNLIGGIFQCFPVSC) traverse the membrane as a helical segment. The Cytoplasmic segment spans residues 401 to 416 (SMSRSLVQESTGGNSQ). Residues 417-437 (VAGAISSLFILLIIVKLGELF) form a helical membrane-spanning segment. At 438 to 484 (HDLPKAVLAAIIIVNLKGMLRQLSDMRSLWKANRADLLIWLVTFTAT) the chain is on the extracellular side. Residues 485-505 (ILLNLDLGLVVAVIFSLLLVV) form a helical membrane-spanning segment. At 506 to 759 (VRTQMPHYSV…PDSPVSVTRL (254 aa)) the chain is on the cytoplasmic side. The region spanning 530-742 (EYSEAKEVRG…ASVHDAVTFA (213 aa)) is the STAS domain. Asn553 and Lys582 each carry phosphoserine; by PKC. Phosphoserine is present on Ser616. Positions 636-657 (GDKMEDATANGQEDSKAPDGST) are disordered. Ser752 and Ser755 each carry phosphoserine.

It belongs to the SLC26A/SulP transporter (TC 2.A.53) family. Interacts (via C-terminal domain) with PDZK1 (via C-terminal PDZ domain); the interaction induces chloride and oxalate exchange transport. Interacts with CFTR and SLC26A3. Interacts with AHCYL1; the interaction increases SLC26A6 activity. In terms of assembly, interacts with NHERF1 (via the PDZ domains) and NHERF2 (via the PDZ domains). Interacts (via C-terminal cytoplasmic domain) with CA2; the interaction stimulates chloride-bicarbonate exchange activity. As to quaternary structure, interacts with NHERF1 (via the PDZ domains) and NHERF2 (via the PDZ domains). Phosphorylated on serine residues by PKC; the phosphorylation disrupts interaction with carbonic anhydrase CA2 and reduces bicarbonate transport activity in a phorbol myristate acetate (PMA)-induced manner. In terms of processing, glycosylation at Asn-167 and Asn-172 positively regulates its chloride oxalate exchanger activity. As to expression, ubiquitous. Highest levels in kidney and pancreas. Lower expression in heart, skeletal muscle, liver and placenta. Also found in lung and brain. In terms of tissue distribution, ubiquitously expressed. Highest levels expressed in the kidney and pancreas. Expressed weakly in placenta, lung, liver and pancreas. As to expression, expressed in heart, brain, placenta, lung, liver, kidney, pancreas, spleen, thymus, prostate, testis and ovary.

The protein localises to the cell membrane. It is found in the apical cell membrane. Its subcellular location is the cytoplasmic vesicle membrane. The protein resides in the microsome. It localises to the basolateral cell membrane. It carries out the reaction 2 hydrogencarbonate(in) + chloride(out) = 2 hydrogencarbonate(out) + chloride(in). It catalyses the reaction oxalate(in) + chloride(out) = oxalate(out) + chloride(in). The enzyme catalyses oxalate(in) + formate(out) = oxalate(out) + formate(in). The catalysed reaction is oxalate(in) + sulfate(out) = oxalate(out) + sulfate(in). It carries out the reaction 2 hydrogencarbonate(out) + sulfate(in) = 2 hydrogencarbonate(in) + sulfate(out). Its activity is regulated as follows. Oxalate transport activity is inhibited by 4,4'-diisothiocyanatostilbene-2,2'-disulfonic acid (DIDS). Chloride, bicarbonate and sulfate transport activities are inhibited by 4,4'-diisothiocyanatostilbene-2,2'-disulfonic acid (DIDS). Its function is as follows. Apical membrane anion-exchanger with wide epithelial distribution that plays a role as a component of the pH buffering system for maintaining acid-base homeostasis. Acts as a versatile DIDS-sensitive inorganic and organic anion transporter that mediates the uptake of monovalent anions like chloride, bicarbonate, formate and hydroxyl ion and divalent anions like sulfate and oxalate. Functions in multiple exchange modes involving pairs of these anions, which include chloride-bicarbonate, chloride-oxalate, oxalate-formate, oxalate-sulfate and chloride-formate exchange. Apical membrane chloride-bicarbonate exchanger that mediates luminal chloride absorption and bicarbonate secretion by the small intestinal brush border membrane and contributes to intracellular pH regulation in the duodenal upper villous epithelium during proton-coupled peptide absorption, possibly by providing a bicarbonate import pathway. Also mediates intestinal chloride absorption and oxalate secretion, thereby preventing hyperoxaluria and calcium oxalate urolithiasis. Transepithelial oxalate secretion, chloride-formate, chloride-oxalate and chloride-bicarbonate transport activities in the duodenum are inhibited by PKC activation in a calcium-independent manner. The apical membrane chloride-bicarbonate exchanger also provides a major route for fluid and bicarbonate secretion into the proximal tubules of the kidney as well as into the proximal part of the interlobular pancreatic ductal tree, where it mediates electrogenic chloride-bicarbonate exchange with a chloride-bicarbonate stoichiometry of 1:2, and hence will dilute and alkalinize protein-rich acinar secretion. Also mediates the transcellular sulfate absorption and oxalate secretion across the apical membrane in the duodenum and the formate ion efflux at the apical brush border of cells in the proximal tubules of kidney. Plays a role in sperm capacitation by increasing intracellular pH. Apical membrane chloride-bicarbonate exchanger. Its association with carbonic anhydrase CA2 forms a bicarbonate transport metabolon; hence maximizes the local concentration of bicarbonate at the transporter site. This chain is Solute carrier family 26 member 6 (SLC26A6), found in Homo sapiens (Human).